Reading from the N-terminus, the 276-residue chain is Expansin-like A3 (276 aa).

Positions 1–28 are cleaved as a signal peptide; it reads MAVLLSILSSSFLLLLAASSSSTPRASA. The 107-residue stretch at 52–158 folds into the Expansin-like EG45 domain; sequence GGGCGYGAMA…RRIPCDYKDK (107 aa). N-linked (GlcNAc...) asparagine glycosylation is found at Asn115 and Asn159. Residues 172-255 enclose the Expansin-like CBD domain; it reads NNLVIKFLYQ…NWQPGQVYDT (84 aa).

The protein belongs to the expansin family. Expansin-like A subfamily.

It is found in the secreted. This chain is Expansin-like A3 (EXLA3), found in Oryza sativa subsp. japonica (Rice).